Consider the following 846-residue polypeptide: DNA mismatch repair protein MutS (846 aa).

594–601 lines the ATP pocket; that stretch reads GPNMSGKS.

It belongs to the DNA mismatch repair MutS family.

In terms of biological role, this protein is involved in the repair of mismatches in DNA. It is possible that it carries out the mismatch recognition step. This protein has a weak ATPase activity. In Macrococcus caseolyticus (strain JCSC5402) (Macrococcoides caseolyticum), this protein is DNA mismatch repair protein MutS.